We begin with the raw amino-acid sequence, 518 residues long: Bifunctional purine biosynthesis protein PurH (518 aa).

Residues 1–146 form the MGS-like domain; it reads MARIALISVS…KNHESVSILT (146 aa).

This sequence belongs to the PurH family.

It carries out the reaction (6R)-10-formyltetrahydrofolate + 5-amino-1-(5-phospho-beta-D-ribosyl)imidazole-4-carboxamide = 5-formamido-1-(5-phospho-D-ribosyl)imidazole-4-carboxamide + (6S)-5,6,7,8-tetrahydrofolate. The enzyme catalyses IMP + H2O = 5-formamido-1-(5-phospho-D-ribosyl)imidazole-4-carboxamide. It functions in the pathway purine metabolism; IMP biosynthesis via de novo pathway; 5-formamido-1-(5-phospho-D-ribosyl)imidazole-4-carboxamide from 5-amino-1-(5-phospho-D-ribosyl)imidazole-4-carboxamide (10-formyl THF route): step 1/1. Its pathway is purine metabolism; IMP biosynthesis via de novo pathway; IMP from 5-formamido-1-(5-phospho-D-ribosyl)imidazole-4-carboxamide: step 1/1. This chain is Bifunctional purine biosynthesis protein PurH, found in Prochlorococcus marinus (strain MIT 9211).